The primary structure comprises 185 residues: Ribosome hibernation promotion factor (185 aa).

A probably still associates with ribosome region spans residues 1 to 125 (MIKFNIRGEN…PLDTTDEVAE (125 aa)). The interval 126 to 185 (DHVDIVRTKHVALKPMDAEEAVLQMDMLGHDFYVFTDADSNGTHVVYRRTDGRYGLIETE) is required but not sufficient to restore ribosome dimerization, in vitro will replace E.coli RMF in ribosome dimerization.

The protein belongs to the HPF/YfiA ribosome-associated protein family. Long HPF subfamily. Interacts with 100S ribosomes in stationary phase; alters the relative position of the 30S and 50S subunits.

Its subcellular location is the cytoplasm. In terms of biological role, required for dimerization of active 70S ribosomes into 100S ribosomes in stationary phase; 100S ribosomes are translationally inactive and sometimes present during exponential growth. Able to dimerize E.coli 70S ribosomes in vitro. This is Ribosome hibernation promotion factor from Lactococcus lactis subsp. cremoris (strain MG1363).